We begin with the raw amino-acid sequence, 557 residues long: Leucine-rich glioma-inactivated protein 1 (557 aa).

The N-terminal stretch at Met1–Gly34 is a signal peptide. One can recognise an LRRNT domain in the interval Lys35–Leu72. LRR repeat units follow at residues Ser92–Gly113, His116–Gly137, and Ser140–Gly161. The 51-residue stretch at Asn173–Ile223 folds into the LRRCT domain. An N-linked (GlcNAc...) asparagine glycan is attached at Asn192. 7 EAR repeats span residues Glu225–His267, Thr271–Ser313, Lys317–Gly364, Gly366–Lys415, Leu419–Gly462, Ser464–Ala506, and Lys510–Ile552. Asn277 is a glycosylation site (N-linked (GlcNAc...) asparagine). A glycan (N-linked (GlcNAc...) asparagine) is linked at Asn422.

In terms of assembly, oligomer. Interacts with KCNA1 within a complex containing KCNA1, KCNA4 and KCNAB1. Part of a complex containing ADAM22, DLG4/PSD95 and CACNG2/Stargazin. Can bind to ADAM11 and ADAM23. In terms of processing, glycosylated. Predominantly expressed in neural tissues, especially in brain. Expression is reduced in low-grade brain tumors and significantly reduced or absent in malignant gliomas. As to expression, expressed in the occipital cortex and hippocampus; higher amounts are observed in the parietal and frontal cortices, putamen, and, particularly, in the temporal neocortex, where it is between 3 and 5 times more abundant than in the hippocampus (at protein level). Expression is absent in the cerebellum. In terms of tissue distribution, abundantly expressed in the occipital cortex and weakly expressed in the hippocampus (at protein level).

The protein localises to the secreted. It is found in the synapse. Its subcellular location is the cytoplasm. The protein resides in the golgi apparatus. It localises to the endoplasmic reticulum. Its function is as follows. Regulates voltage-gated potassium channels assembled from KCNA1, KCNA4 and KCNAB1. It slows down channel inactivation by precluding channel closure mediated by the KCNAB1 subunit. Ligand for ADAM22 that positively regulates synaptic transmission mediated by AMPA-type glutamate receptors. Plays a role in suppressing the production of MMP1/3 through the phosphatidylinositol 3-kinase/ERK pathway. May play a role in the control of neuroblastoma cell survival. This chain is Leucine-rich glioma-inactivated protein 1 (LGI1), found in Homo sapiens (Human).